The sequence spans 244 residues: Monothiol glutaredoxin-4 (244 aa).

Residues 3–110 (VVEIKSQDQF…FVKSLEILSN (108 aa)) form the Thioredoxin domain. The segment at 116 to 143 (ANNAKGPKSTSDEESSGSSDDEEDETEE) is disordered. The span at 127 to 143 (DEESSGSSDDEEDETEE) shows a compositional bias: acidic residues. Positions 146–244 (NARLVKLVQA…DPEYFQHALQ (99 aa)) constitute a Glutaredoxin domain. Position 163 (Lys-163) interacts with glutathione. Position 171 (Cys-171) interacts with [2Fe-2S] cluster. Glutathione is bound by residues Arg-200, Phe-212, and 225–226 (LD).

The protein belongs to the glutaredoxin family. Monothiol subfamily. As to quaternary structure, homodimer. Heterodimer with FRA2.

Functionally, monothiol glutaredoxin involved in the biogenesis of iron-sulfur clusters. Binds one iron-sulfur cluster per dimer. The iron-sulfur cluster is bound between subunits, and is complexed by a bound glutathione and a cysteine residue from each subunit. In Saccharomyces cerevisiae (strain ATCC 204508 / S288c) (Baker's yeast), this protein is Monothiol glutaredoxin-4 (GRX4).